A 355-amino-acid chain; its full sequence is Holliday junction branch migration complex subunit RuvB (355 aa).

Residues 1–193 (MGRFSEDSAD…FGFTAHMDFY (193 aa)) form a large ATPase domain (RuvB-L) region. ATP is bound by residues Leu32, Arg33, Gly74, Lys77, Thr78, Ser79, 140 to 142 (EDF), Arg183, Tyr193, and Arg230. Thr78 is a Mg(2+) binding site. Residues 194–264 (EPSELERVLA…IAKYALEVYD (71 aa)) are small ATPAse domain (RuvB-S). The segment at 267 to 355 (ELGLDRLDRA…VGLGQTGLFD (89 aa)) is head domain (RuvB-H). DNA-binding residues include Arg322 and Arg327.

The protein belongs to the RuvB family. Homohexamer. Forms an RuvA(8)-RuvB(12)-Holliday junction (HJ) complex. HJ DNA is sandwiched between 2 RuvA tetramers; dsDNA enters through RuvA and exits via RuvB. An RuvB hexamer assembles on each DNA strand where it exits the tetramer. Each RuvB hexamer is contacted by two RuvA subunits (via domain III) on 2 adjacent RuvB subunits; this complex drives branch migration. In the full resolvosome a probable DNA-RuvA(4)-RuvB(12)-RuvC(2) complex forms which resolves the HJ.

It localises to the cytoplasm. It catalyses the reaction ATP + H2O = ADP + phosphate + H(+). The RuvA-RuvB-RuvC complex processes Holliday junction (HJ) DNA during genetic recombination and DNA repair, while the RuvA-RuvB complex plays an important role in the rescue of blocked DNA replication forks via replication fork reversal (RFR). RuvA specifically binds to HJ cruciform DNA, conferring on it an open structure. The RuvB hexamer acts as an ATP-dependent pump, pulling dsDNA into and through the RuvAB complex. RuvB forms 2 homohexamers on either side of HJ DNA bound by 1 or 2 RuvA tetramers; 4 subunits per hexamer contact DNA at a time. Coordinated motions by a converter formed by DNA-disengaged RuvB subunits stimulates ATP hydrolysis and nucleotide exchange. Immobilization of the converter enables RuvB to convert the ATP-contained energy into a lever motion, pulling 2 nucleotides of DNA out of the RuvA tetramer per ATP hydrolyzed, thus driving DNA branch migration. The RuvB motors rotate together with the DNA substrate, which together with the progressing nucleotide cycle form the mechanistic basis for DNA recombination by continuous HJ branch migration. Branch migration allows RuvC to scan DNA until it finds its consensus sequence, where it cleaves and resolves cruciform DNA. This chain is Holliday junction branch migration complex subunit RuvB, found in Mycolicibacterium vanbaalenii (strain DSM 7251 / JCM 13017 / BCRC 16820 / KCTC 9966 / NRRL B-24157 / PYR-1) (Mycobacterium vanbaalenii).